Reading from the N-terminus, the 532-residue chain is Bone morphogenetic protein receptor type-1A (532 aa).

A signal peptide spans 1 to 23 (MPQLYIYIRLLGAYLFIISRVQG). At 24-152 (QNLDSMLHGT…IGPFFDGSIR (129 aa)) the chain is on the extracellular side. Disulfide bonds link Cys61-Cys82, Cys63-Cys67, and Cys76-Cys100. N-linked (GlcNAc...) asparagine glycosylation is present at Asn73. The mediates specificity for BMP ligand stretch occupies residues 107 to 109 (DFQ). Intrachain disulfides connect Cys110–Cys124 and Cys125–Cys130. Residues 153-176 (WLVLLISMAVCIIAMIIFSSCFCY) form a helical membrane-spanning segment. Topologically, residues 177 to 532 (KHYCKSISSR…KMVESQDVKI (356 aa)) are cytoplasmic. In terms of domain architecture, GS spans 204 to 233 (ESLKDLIDQSQSSGSGSGLPLLVQRTIAKQ). The region spanning 234-525 (IQMVRQVGKG…RIKKTLAKMV (292 aa)) is the Protein kinase domain. ATP-binding positions include 240–248 (VGKGRYGEV) and Lys261. The active-site Proton acceptor is Asp362.

It belongs to the protein kinase superfamily. TKL Ser/Thr protein kinase family. TGFB receptor subfamily. In terms of assembly, interacts with low affinity with GDF5; positively regulates chondrocyte differentiation. Interacts with BMP4. Interacts with SCUBE3. Interacts with TSC22D1/TSC-22. Interacts with BMP2; the interaction may induce HAMP expression. Interacts with BMP6. Interacts with heterodimers composed of BMP2 and BMP6 in vitro; the interaction may induce HAMP expression. Interacts with TGFBR3. It depends on Mg(2+) as a cofactor. The cofactor is Mn(2+). Post-translationally, glycosylated. As to expression, highly expressed in skeletal muscle.

It localises to the cell membrane. The protein resides in the cell surface. The enzyme catalyses L-threonyl-[receptor-protein] + ATP = O-phospho-L-threonyl-[receptor-protein] + ADP + H(+). It carries out the reaction L-seryl-[receptor-protein] + ATP = O-phospho-L-seryl-[receptor-protein] + ADP + H(+). Its function is as follows. On ligand binding, forms a receptor complex consisting of two type II and two type I transmembrane serine/threonine kinases. Type II receptors phosphorylate and activate type I receptors which autophosphorylate, then bind and activate SMAD transcriptional regulators. Receptor for BMP2, BMP4, GDF5 and GDF6. Positively regulates chondrocyte differentiation through GDF5 interaction. Mediates induction of adipogenesis by GDF6. May promote the expression of HAMP, potentially via its interaction with BMP2. The polypeptide is Bone morphogenetic protein receptor type-1A (BMPR1A) (Homo sapiens (Human)).